Reading from the N-terminus, the 399-residue chain is MDAARASLLLAGGLAVSTSTSAVATAAQTVSIPHLSPHTRRRRQRRFLRLASAAASSPPPLPAASAQPHCSRWVVVMERPPAPAGGGEVSRAEAVDHYVATLARVLGSQEEAQMRIYDASWDGSYEFSCEIDDEASRDLAKMPGVLAVKPDTDKVDMSEKDNHGSGLSAANLGNFSDAVSNHSSSSGENEFWLVRMEKPGVEVVTKAQMVDHYTQTLMKVLGNEKDAQVSIYHISWERDYGFCCHIDEECAKELADVSGVLSVQPDTNFGSDNKNYKGDDSFKSSEATQAEVKTKRLFVTGLSFYTSEKTLRAAFEPFGELVEVKIIMDKISKRSKGYAFIEYTTEEAGGAALKAMNGQIINGWMIVVDVAKHRSRDRQPPYSASGRSNQVLRSRYHTG.

A chloroplast-targeting transit peptide spans 1–52 (MDAARASLLLAGGLAVSTSTSAVATAAQTVSIPHLSPHTRRRRQRRFLRLAS). Residues 295 to 373 (KRLFVTGLSF…WMIVVDVAKH (79 aa)) enclose the RRM domain. A disordered region spans residues 377 to 399 (DRQPPYSASGRSNQVLRSRYHTG).

The protein localises to the plastid. It is found in the chloroplast. Functionally, involved in C-to-U editing of chloroplastic RNA. Functions as major chloroplastic editing factor. Controls a majority of the chloroplastic editing sites. This Oryza sativa subsp. japonica (Rice) protein is Organelle RRM domain-containing protein 1, chloroplastic.